The chain runs to 349 residues: Protein RecA (349 aa).

G65–T72 serves as a coordination point for ATP.

This sequence belongs to the RecA family.

The protein localises to the cytoplasm. In terms of biological role, can catalyze the hydrolysis of ATP in the presence of single-stranded DNA, the ATP-dependent uptake of single-stranded DNA by duplex DNA, and the ATP-dependent hybridization of homologous single-stranded DNAs. It interacts with LexA causing its activation and leading to its autocatalytic cleavage. This chain is Protein RecA, found in Aliarcobacter butzleri (strain RM4018) (Arcobacter butzleri).